The sequence spans 234 residues: MKIEYFGHSAFKIVSEEGLIMLIDPFISNNPLCSTPVETIDADVILITHGHSDHFGDALEIANNSGATIIATAEIANFVQRQGINAIAMNIGGTVSINNLVNVTMTDARHTSSIDFTEEVEEGGSATGFVITLESGKKIYHAGDTGLFGDMKTVIGDIYKPDIALIPIGDKYTMGIEDAAIAAKWLQSRIVIPMHYNTFPGIEQDVELFAKNVEDEIIGTMTVPLMPGEDYREE.

The protein belongs to the UPF0173 family.

The protein is UPF0173 metal-dependent hydrolase Msp_0516 of Methanosphaera stadtmanae (strain ATCC 43021 / DSM 3091 / JCM 11832 / MCB-3).